The primary structure comprises 189 residues: UPF0301 protein bbp_491 (189 aa).

The protein belongs to the UPF0301 (AlgH) family.

The polypeptide is UPF0301 protein bbp_491 (Buchnera aphidicola subsp. Baizongia pistaciae (strain Bp)).